Consider the following 2764-residue polypeptide: MDVKDRRHRSLTRGRCGKECRYTSSSLDSEDCRVPTQKSYSSSETLKAYDHDSRMHYGNRVTDLVHRESDEFSRQGTNFTLAELGICEPSPHRSGYCSDMGILHQGYSLSTGSDADSDTEGGMSPEHAIRLWGRGIKSRRSSGLSSRENSALTLTDSDNENKSDDDNGRPIPPTSSSSLLPSAQLPSSHNPPPVSCQMPLLDSNTSHQIMDTNPDEEFSPNSYLLRACSGPQQASSSGPPNHHSQSTLRPPLPPPHNHTLSHHHSSANSLNRNSLTNRRSQIHAPAPAPNDLATTPESVQLQDSWVLNSNVPLETRHFLFKTSSGSTPLFSSSSPGYPLTSGTVYTPPPRLLPRNTFSRKAFKLKKPSKYCSWKCAALSAIAAALLLAILLAYFIAMHLLGLNWQLQPADGHTFNNGVRTGLPGNDDVATVPSGGKVPWSLKNSSIDSGEAEVGRRVTQEVPPGVFWRSQIHISQPQFLKFNISLGKDALFGVYIRRGLPPSHAQYDFMERLDGKEKWSVVESPRERRSIQTLVQNEAVFVQYLDVGLWHLAFYNDGKDKEMVSFNTVVLDSVQDCPRNCHGNGECVSGLCHCFPGFLGADCAKAACPVLCSGNGQYSKGTCQCYSGWKGAECDVPMNQCIDPSCGGHGSCIDGNCVCAAGYKGEHCEEVDCLDPTCSSHGVCVNGECLCSPGWGGLNCELARVQCPDQCSGHGTYLPDSGLCSCDPNWMGPDCSVVCSVDCGTHGVCIGGACRCEEGWTGAACDQRVCHPRCIEHGTCKDGKCECREGWNGEHCTIDGCPDLCNGNGRCTLGQNSWQCVCQTGWRGPGCNVAMETSCADNKDNEGDGLVDCLDPDCCLQSACQNSLLCRGSRDPLDIIQQGQTDWPAVKSFYDRIKLLAGKDSTHIIPGDNPFNSSLVSLIRGQVVTMDGTPLVGVNVSFVKYPKYGYTITRQDGTFDLIANGGSALTLHFERAPFMSQERTVWLPWNSFYAMDTLVMKTEENSIPSCDLSGFVRPDPIIISSPLSTFFSASPASNPIVPETQVLHEEIELPGTNVKLRYLSSRTAGYKSLLKITMTQSTVPLNLIRVHLMVAVEGHLFQKSFQASPNLAYTFIWDKTDAYGQRVYGLSDAVVSVGFEYETCPSLILWEKRTALLQGFELDPSNLGGWSLDKHHTLNVKSGILHKGTGENQFLTQQPAIITSIMGNGRRRSISCPSCNGLAEGNKLLAPVALAVGIDGSLFVGDFNYIRRIFPSRNVTSILELRNKEFKHSNSPGHKYYLAVDPVTGSLYVSDTNSRRIYRVKSLSGAKDLAGNSEVVAGTGEQCLPFDEARCGDGGKAVDATLMSPRGIAVDKNGLMYFVDATMIRKVDQNGIISTLLGSNDLTAVRPLSCDSSMDVAQVRLEWPTDLAVNPMDNSLYVLENNVILRITENHQVSIIAGRPMHCQVPGIDYSLSKLAIHSALESASAIAISHTGVLYITETDEKKINRLRQVTTNGEICLLAGAASDCDCKNDVNCICYSGDDAYATDAILNSPSSLAVAPDGTIYIADLGNIRIRAVSKNKPVLNAFNQYEAASPGEQELYVFNADGIHQYTVSLVTGEYLYNFTYSADNDVTELIDNNGNSLKIRRDSSGMPRHLLMPDNQIITLTVGTNGGLKAVSTQNLELGLMTYDGNTGLLATKSDETGWTTFYDYDHEGRLTNVTRPTGVVTSLHREMEKSITIDIENSNRDDDVTVITNLSSVEASYTVVQDQVRNSYQLCNNGTLRVMYANGMAVSFHSEPHVLAGTITPTIGRCNISLPMENGLNSIEWRLRKEQIKGKVTIFGRKLRVHGRNLLSIDYDRNIRTEKIYDDHRKFTLRIIYDQVGRPFLWLPSSGLAAVNVSYFFNGRLAGLQRGAMSERTDIDKQGRIVSRMFADGKVWSYSYLDKSMVLLLQSQRQYIFEYDSSDRLHAVTMPSVARHSMSTHTSIGYIRNIYNPPESNASVIFDYSDDGRILKTSFLGTGRQVFYKYGKLSKLSEIVYDSTAVTFGYDETTGVLKMVNLQSGGFSCTIRYRKVGPLVDKQIYRFSEEGMINARFDYTYHDNSFRIASIKPVISETPLPVDLYRYDEISGKVEHFGKFGVIYYDINQIITTAVMTLSKHFDTHGRIKEVQYEMFRSLMYWMTVQYDSMGRVIKRELKLGPYANTTKYTYDYDGDGQLQSVAVNDRPTWRYSYDLNGNLHLLNPGNSARLMPLRYDLRDRITRLGDVQYKIDDDGYLCQRGSDIFEYNSKGLLTRAYNKASGWSVQYRYDGVGRRASYKTNLGHHLQYFYSDLHNPTRITHVYNHSNSEITSLYYDLQGHLFAMESSSGEEYYVASDNTGTPLAVYSINGLMIKQLQYTAYGEIYYDSNPDFQMVIGFHGGLYDPLTKLVHFTQRDYDVLAGRWTSPDYTMWRNVGKEPAPFNLYMFKNNNPLSNELDLKNYVTDVKSWLVMFGFQLSNIIPGFPRAKMYFVPPPYELSESQASENGQLITGVQQTTERHNQAFLALEGQVITKKLHASIREKAGHWFATTTPIIGKGIMFAIKEGRVTTGVSSIASEDSRKVASVLNNAYYLDKMHYSIEGKDTHYFVKIGAADGDLVTLGTTIGRKVLESGVNVTVSQPTLLVNGRTRRFTNIEFQYSTLLLSIRYGLTPDTLDEEKARVLDQAGQRALGTAWAKEQQKARDGREGSRLWTEGEKQQLLSTGRVQGYEGYYVLPVEQYPELADSSSNIQFLRQNEMGKR.

The Teneurin N-terminal domain occupies 1 to 375 (MDVKDRRHRS…KPSKYCSWKC (375 aa)). At 1–379 (MDVKDRRHRS…YCSWKCAALS (379 aa)) the chain is on the cytoplasmic side. A phosphoserine mark is found at Ser90 and Ser124. The disordered stretch occupies residues 111-271 (TGSDADSDTE…HHHSSANSLN (161 aa)). Over residues 141 to 155 (SSGLSSRENSALTLT) the composition is skewed to polar residues. Thr155 is modified (phosphothreonine). Ser157 is subject to Phosphoserine. Residues 159 to 168 (NENKSDDDNG) are compositionally biased toward basic and acidic residues. The segment covering 174–188 (TSSSSLLPSAQLPSS) has biased composition (low complexity). A compositionally biased stretch (polar residues) spans 202-211 (DSNTSHQIMD). A compositionally biased stretch (low complexity) spans 229 to 240 (SGPQQASSSGPP). Residues 380–400 (AIAAALLLAILLAYFIAMHLL) traverse the membrane as a helical segment. Residues 401 to 2764 (GLNWQLQPAD…FLRQNEMGKR (2364 aa)) lie on the Extracellular side of the membrane. Asn443 and Asn482 each carry an N-linked (GlcNAc...) asparagine glycan. EGF-like domains follow at residues 575 to 603 (DCPR…ADCA), 598 to 634 (LGAD…AECD), 636 to 668 (PMNQ…EHCE), 669 to 701 (EVDC…NCEL), 702 to 735 (ARVQ…PDCS), 737 to 765 (VCSV…AACD), 768 to 796 (VCHP…EHCT), and 798 to 831 (DGCP…PGCN). Cystine bridges form between Cys576–Cys586, Cys580–Cys591, Cys593–Cys602, Cys611–Cys622, Cys624–Cys633, Cys640–Cys651, Cys645–Cys656, Cys658–Cys667, Cys672–Cys683, Cys677–Cys688, Cys690–Cys699, Cys710–Cys723, Cys725–Cys734, Cys738–Cys748, Cys742–Cys753, Cys755–Cys764, Cys769–Cys779, Cys773–Cys784, Cys786–Cys795, Cys800–Cys810, Cys804–Cys819, and Cys821–Cys830. N-linked (GlcNAc...) asparagine glycans are attached at residues Asn915, Asn938, and Asn1257. NHL repeat units follow at residues 1262–1306 (LELR…VKSL), 1332–1376 (ARCG…NGII), 1391–1442 (LSCD…IAGR), 1464–1491 (LESA…INRL), and 1520–1563 (CYSG…VSKN). A YD 1 repeat occupies 1573–1592 (YEAASPGEQELYVFNADGIH). Asn1606 carries an N-linked (GlcNAc...) asparagine glycan. YD repeat units lie at residues 1609–1629 (YSAD…LKIR), 1672–1691 (YDGN…WTTF), and 1692–1714 (YDYD…TSLH). N-linked (GlcNAc...) asparagine glycans are attached at residues Asn1702, Asn1739, Asn1763, Asn1797, and Asn1882. YD repeat units lie at residues 1885–1904 (YFFN…ERTD), 1926–1944 (YLDK…YIFE), 1945–1965 (YDSS…HSMS), 1972–1989 (YIRN…VIFD), 1990–2011 (YSDD…VFYK), 2012–2029 (YGKL…TAVT), 2032–2052 (YDET…FSCT), 2055–2075 (YRKV…EGMI), 2083–2103 (YHDN…TPLP), 2109–2126 (YDEI…GVIY), 2127–2153 (YDIN…IKEV), 2155–2168 (YEMF…MTVQ), 2169–2192 (YDSM…TKYT), 2195–2215 (YDGD…WRYS), 2216–2236 (YDLN…LMPL), 2238–2258 (YDLR…DDDG), 2270–2290 (YNSK…SVQY), and 2292–2312 (YDGV…LQYF). Asn1983 carries N-linked (GlcNAc...) asparagine glycosylation. N-linked (GlcNAc...) asparagine glycosylation is present at Asn2187. Asn2327 carries an N-linked (GlcNAc...) asparagine glycan. One copy of the YD 23 repeat lies at 2338 to 2379 (YDLQGHLFAMESSSGEEYYVASDNTGTPLAVYSINGLMIKQL). The N-linked (GlcNAc...) asparagine glycan is linked to Asn2638.

This sequence belongs to the tenascin family. Teneurin subfamily. Homodimer; disulfide-linked. Heterodimer with either TENM1 or TENM3. May also form heterodimer with TENM4. Derives from the membrane form by proteolytic processing. Post-translationally, derives from the plasma membrane form by proteolytic cleavage and translocates to the nucleus. Homophilic binding of the C-terminal extracellular domain stimulates its proteolytic cleavage and release in the cytoplasmic. Is subjected to rapid degradation by the proteasome pathway. As to expression, expressed in the cortex, CA1, CA2, CA3, dentate gyrus and granular layer of the hippocampus. Expressed in the Purkinje cells and molecular layer of the cerebellum.

It localises to the cell membrane. The protein localises to the presynaptic cell membrane. It is found in the postsynaptic cell membrane. Its subcellular location is the endoplasmic reticulum. The protein resides in the golgi apparatus. It localises to the synapse. The protein localises to the cell projection. It is found in the dendritic spine. Its subcellular location is the filopodium. The protein resides in the growth cone. It localises to the nucleus. The protein localises to the PML body. Involved in neural development, regulating the establishment of proper connectivity within the nervous system. Acts as a ligand of the ADGRL1 and ADGRL3 receptors that are expressed at the surface of adjacent cells. Promotes the formation of filopodia and enlarged growth cone in neuronal cells. Mediates axon guidance and homophilic and heterophilic cell-cell adhesion. May function as a cellular signal transducer. Its function is as follows. Induces gene transcription inhibition. This is Teneurin-2 (Tenm2) from Mus musculus (Mouse).